The primary structure comprises 312 residues: Glycerol-3-phosphate phosphatase (312 aa).

Aspartate 30 functions as the Nucleophile in the catalytic mechanism. Mg(2+) contacts are provided by aspartate 30, aspartate 32, and aspartate 251. Catalysis depends on aspartate 32, which acts as the Proton donor.

The protein belongs to the HAD-like hydrolase superfamily. CbbY/CbbZ/Gph/YieH family. As to quaternary structure, homodimer. It depends on Mg(2+) as a cofactor.

The catalysed reaction is O-phospho-L-tyrosyl-[protein] + H2O = L-tyrosyl-[protein] + phosphate. It catalyses the reaction sn-glycerol 1-phosphate + H2O = glycerol + phosphate. The enzyme catalyses sn-glycerol 3-phosphate + H2O = glycerol + phosphate. Functionally, glycerol-3-phosphate phosphatase hydrolyzing glycerol-3-phosphate into glycerol. Thereby, regulates the cellular levels of glycerol-3-phosphate a metabolic intermediate of glucose, lipid and energy metabolism. Was also shown to have a 2-phosphoglycolate phosphatase activity and a tyrosine-protein phosphatase activity. However, their physiological relevance is unclear. In vitro, also has a phosphatase activity toward ADP, ATP, GDP and GTP. The protein is Glycerol-3-phosphate phosphatase of Gallus gallus (Chicken).